The chain runs to 329 residues: Gibberellin 2-beta-dioxygenase 1 (329 aa).

The 109-residue stretch at 165-273 folds into the Fe2OG dioxygenase domain; that stretch reads NTDSILRLNH…RVSMIYFAGP (109 aa). Residues His197, Asp199, and His254 each coordinate Fe cation. Residue Arg264 is part of the active site. Arg264 is a 2-oxoglutarate binding site.

The protein belongs to the iron/ascorbate-dependent oxidoreductase family. GA2OX subfamily. It depends on Fe(2+) as a cofactor. In terms of tissue distribution, preferentially expressed in flowers, siliques, and upper stems. Not expressed in the apex.

It carries out the reaction gibberellin A1 + 2-oxoglutarate + O2 = gibberellin A8 + succinate + CO2. Its pathway is plant hormone biosynthesis; gibberellin biosynthesis. Catalyzes the 2-beta-hydroxylation of several biologically active gibberellins, leading to the homeostatic regulation of their endogenous level. Catabolism of gibberellins (GAs) plays a central role in plant development. Converts GA9/GA20 to GA51/GA29 and GA4/GA1 to GA34/GA8. The chain is Gibberellin 2-beta-dioxygenase 1 (GA2OX1) from Arabidopsis thaliana (Mouse-ear cress).